Consider the following 292-residue polypeptide: Undecaprenyl-diphosphatase (292 aa).

7 helical membrane-spanning segments follow: residues 1 to 21 (MSLV…FLPV), 46 to 66 (FVTI…RADI), 90 to 110 (LGWY…LLEH), 114 to 134 (ALGN…LLAA), 192 to 212 (FLLS…STVP), 225 to 245 (VVGT…LLAW), and 253 to 273 (VFVV…LSGV).

This sequence belongs to the UppP family.

The protein resides in the cell inner membrane. It carries out the reaction di-trans,octa-cis-undecaprenyl diphosphate + H2O = di-trans,octa-cis-undecaprenyl phosphate + phosphate + H(+). Its function is as follows. Catalyzes the dephosphorylation of undecaprenyl diphosphate (UPP). Confers resistance to bacitracin. The chain is Undecaprenyl-diphosphatase from Anaeromyxobacter dehalogenans (strain 2CP-1 / ATCC BAA-258).